We begin with the raw amino-acid sequence, 92 residues long: UPF0223 protein SPCG_1392 (92 aa).

Belongs to the UPF0223 family.

The polypeptide is UPF0223 protein SPCG_1392 (Streptococcus pneumoniae (strain CGSP14)).